A 493-amino-acid chain; its full sequence is Dihydro-heme d1 dehydrogenase (493 aa).

The signal sequence occupies residues 1-18; that stretch reads MRLIGLALGLLLGALAQA. The 78-residue stretch at 19–96 folds into the Cytochrome c domain; it reads GEAPGEALYR…ALVAYLYQAP (78 aa). Heme c-binding residues include Cys-31, Cys-34, His-35, Arg-68, and Met-73. Residues 114–468 are D1-heme domain; it reads PHPLATLPSR…YDAHSLEEVK (355 aa). Heme d1 is bound by residues His-165, Gly-167, Lys-169, Arg-182, Arg-207, Asn-208, His-341, Arg-390, and His-435. Arg-182 provides a ligand contact to heme c.

The protein belongs to the cytochrome c family. Monomer. The cofactor is heme c.

It localises to the periplasm. The catalysed reaction is dihydro-heme d1 + A = heme d1 + AH2. It participates in porphyrin-containing compound metabolism. Involved in heme d1 biosynthesis. Catalyzes the introduction of a double bond into the propionate side chain of pyrrole ring D of dihydro-heme d1, therefore converting dihydro-heme d1 to heme d1. This chain is Dihydro-heme d1 dehydrogenase, found in Pseudomonas aeruginosa (strain ATCC 15692 / DSM 22644 / CIP 104116 / JCM 14847 / LMG 12228 / 1C / PRS 101 / PAO1).